The chain runs to 609 residues: Dihydroxyacetone kinase (609 aa).

One can recognise a DhaK domain in the interval 8 to 355 (YKQDLVHAHL…LDYPTKVPGW (348 aa)). Residues 53 to 56 (GSGH), lysine 104, and aspartate 109 contribute to the substrate site. Catalysis depends on histidine 232, which acts as the Tele-hemiaminal-histidine intermediate. A DhaL domain is found at 392–600 (STVKAVLESG…LAALVDGFAE (209 aa)). Residues 421 to 424 (DGDC), 467 to 468 (TS), 523 to 524 (TL), and 585 to 587 (DPG) contribute to the ATP site.

Belongs to the dihydroxyacetone kinase (DAK) family.

It carries out the reaction dihydroxyacetone + ATP = dihydroxyacetone phosphate + ADP + H(+). It catalyses the reaction D-glyceraldehyde + ATP = D-glyceraldehyde 3-phosphate + ADP + H(+). The protein operates within polyol metabolism; glycerol fermentation; glycerone phosphate from glycerol (oxidative route): step 2/2. Its function is as follows. Catalyzes both the phosphorylation of dihydroxyacetone and of glyceraldehyde. The polypeptide is Dihydroxyacetone kinase (DAK) (Pichia angusta (Yeast)).